An 81-amino-acid chain; its full sequence is Small ribosomal subunit protein bS16c (81 aa).

Belongs to the bacterial ribosomal protein bS16 family.

It is found in the plastid. It localises to the chloroplast. The chain is Small ribosomal subunit protein bS16c from Emiliania huxleyi (Coccolithophore).